We begin with the raw amino-acid sequence, 332 residues long: Glyceraldehyde-3-phosphate dehydrogenase (332 aa).

Residues 10–11 (RI), D32, and M77 each bind NAD(+). D-glyceraldehyde 3-phosphate contacts are provided by residues 148 to 150 (SCT), T179, 208 to 209 (TG), and R231. The active-site Nucleophile is the C149. NAD(+) is bound at residue N313.

Belongs to the glyceraldehyde-3-phosphate dehydrogenase family. In terms of assembly, homotetramer.

It localises to the cytoplasm. The enzyme catalyses D-glyceraldehyde 3-phosphate + phosphate + NAD(+) = (2R)-3-phospho-glyceroyl phosphate + NADH + H(+). It participates in carbohydrate degradation; glycolysis; pyruvate from D-glyceraldehyde 3-phosphate: step 1/5. The chain is Glyceraldehyde-3-phosphate dehydrogenase (GPDA) from Phytophthora infestans (Potato late blight agent).